A 155-amino-acid chain; its full sequence is MANVESFDLDHTKVRAPYVRLAGVKTTPRGDSISKYDLRLLQPNQGAIDPAAIHTLEHLLAGYLRDHLQDVVDVSPMGCRTGMYMAVIGTPDEEGVLKAFEAALQDTAAHDRPIPGVSELECGNFRDHDLHAARQHAREALAQGLKVQQTVLLQR.

Positions 54, 58, and 122 each coordinate Fe cation.

This sequence belongs to the LuxS family. Homodimer. The cofactor is Fe cation.

It catalyses the reaction S-(5-deoxy-D-ribos-5-yl)-L-homocysteine = (S)-4,5-dihydroxypentane-2,3-dione + L-homocysteine. Involved in the synthesis of autoinducer 2 (AI-2) which is secreted by bacteria and is used to communicate both the cell density and the metabolic potential of the environment. The regulation of gene expression in response to changes in cell density is called quorum sensing. Catalyzes the transformation of S-ribosylhomocysteine (RHC) to homocysteine (HC) and 4,5-dihydroxy-2,3-pentadione (DPD). The chain is S-ribosylhomocysteine lyase from Deinococcus deserti (strain DSM 17065 / CIP 109153 / LMG 22923 / VCD115).